The sequence spans 111 residues: Large ribosomal subunit protein uL22 (111 aa).

It belongs to the universal ribosomal protein uL22 family. Part of the 50S ribosomal subunit.

This protein binds specifically to 23S rRNA; its binding is stimulated by other ribosomal proteins, e.g. L4, L17, and L20. It is important during the early stages of 50S assembly. It makes multiple contacts with different domains of the 23S rRNA in the assembled 50S subunit and ribosome. Functionally, the globular domain of the protein is located near the polypeptide exit tunnel on the outside of the subunit, while an extended beta-hairpin is found that lines the wall of the exit tunnel in the center of the 70S ribosome. The sequence is that of Large ribosomal subunit protein uL22 from Francisella philomiragia subsp. philomiragia (strain ATCC 25017 / CCUG 19701 / FSC 153 / O#319-036).